We begin with the raw amino-acid sequence, 342 residues long: Autoinducer 2 import system permease protein LsrC (342 aa).

Topologically, residues 1–13 (MLKFIQNNREITA) are periplasmic. The chain crosses the membrane as a helical span at residues 14–34 (LLAVVLLFVLPGFLDRQYLSV). At 35 to 38 (QTLT) the chain is on the cytoplasmic side. The chain crosses the membrane as a helical span at residues 39–59 (MVYSSAQILILLAMGATLVML). The Periplasmic portion of the chain corresponds to 60-69 (TRNIDVSVGS). Residues 70-90 (ITGMCAVLLGMLLNAGYSLPV) form a helical membrane-spanning segment. The Cytoplasmic segment spans residues 91-92 (AC). Residues 93-113 (VTTLLLGLLAGFFNGVLVAWL) form a helical membrane-spanning segment. Residue lysine 114 is a topological domain, periplasmic. A helical transmembrane segment spans residues 115–135 (IPAIVATLGTLGLYRGIMLLW). The Cytoplasmic segment spans residues 136-154 (TGGKWIEGLPAELKQLSAP). The helical transmembrane segment at 155 to 175 (LLFGVSAIGWLTIILVAFMAW) threads the bilayer. Over 176–212 (LLAKTAFGRSFYATGDNLQGARQLGVRTEAIRIVAFS) the chain is Periplasmic. Residues 213 to 233 (LNGCMAALAGIVFASQIGFIP) traverse the membrane as a helical segment. The Cytoplasmic segment spans residues 234–251 (NQTGTGLEMKAIAACVLG). Residues 252-272 (GISLLGGSGAIIGAVLGAWFL) traverse the membrane as a helical segment. Over 273–283 (TQIDSVLVLLR) the chain is Periplasmic. The helical transmembrane segment at 284–304 (IPAWWNDFIAGLVLLAVLVFD) threads the bilayer. The Cytoplasmic portion of the chain corresponds to 305–342 (GRLRCALERNLRRQKYARFMTPPPSVKPASSGKKREAA).

Belongs to the binding-protein-dependent transport system permease family. AraH/RbsC subfamily. In terms of assembly, the complex is composed of two ATP-binding proteins (LsrA), two transmembrane proteins (LsrC and LsrD) and a solute-binding protein (LsrB).

It is found in the cell inner membrane. Functionally, part of the ABC transporter complex LsrABCD involved in autoinducer 2 (AI-2) import. Probably responsible for the translocation of the substrate across the membrane. This chain is Autoinducer 2 import system permease protein LsrC (lsrC), found in Escherichia coli O9:H4 (strain HS).